A 206-amino-acid polypeptide reads, in one-letter code: 2,3-bisphosphoglycerate-dependent phosphoglycerate mutase (206 aa).

Residues 9–16 (RHGQSEWN), 22–23 (TG), arginine 61, 88–91 (ERDY), lysine 99, 115–116 (RR), and 159–160 (GN) each bind substrate. Histidine 10 functions as the Tele-phosphohistidine intermediate in the catalytic mechanism. Glutamate 88 (proton donor/acceptor) is an active-site residue.

It belongs to the phosphoglycerate mutase family. BPG-dependent PGAM subfamily. As to quaternary structure, homodimer.

It carries out the reaction (2R)-2-phosphoglycerate = (2R)-3-phosphoglycerate. It participates in carbohydrate degradation; glycolysis; pyruvate from D-glyceraldehyde 3-phosphate: step 3/5. In terms of biological role, catalyzes the interconversion of 2-phosphoglycerate and 3-phosphoglycerate. This is 2,3-bisphosphoglycerate-dependent phosphoglycerate mutase from Chelativorans sp. (strain BNC1).